Consider the following 363-residue polypeptide: Putative dipeptidase YkvY (363 aa).

Asp-222, Asp-233, His-297, Glu-326, and Glu-340 together coordinate Mn(2+).

This sequence belongs to the peptidase M24B family. Mn(2+) is required as a cofactor.

The polypeptide is Putative dipeptidase YkvY (ykvY) (Bacillus subtilis (strain 168)).